Reading from the N-terminus, the 949-residue chain is ATPase 1, plasma membrane-type (949 aa).

N-acetylserine is present on Ser2. Residues 2–61 (SGLEDIKNETVDLEKIPIEEVFQQLKCTREGLTTQEGEDRIVIFGPNKLEEKKESKILKF) lie on the Cytoplasmic side of the membrane. The helical transmembrane segment at 62–81 (LGFMWNPLSWVMEAAALMAI) threads the bilayer. Over 82-93 (ALANGDNRPPDW) the chain is Extracellular. The chain crosses the membrane as a helical span at residues 94-114 (QDFVGIICLLVINSTISFIEE). Over 115 to 243 (NNAGNAAAAL…GHFQKVLTSI (129 aa)) the chain is Cytoplasmic. A helical membrane pass occupies residues 244–264 (GNFCICSIAIGIAIEIVVMYP). Residues 265–273 (IQHRKYRDG) lie on the Extracellular side of the membrane. The helical transmembrane segment at 274-291 (IDNLLVLLIGGIPIAMPT) threads the bilayer. At 292–643 (VLSVTMAIGS…TSRAIFQRMK (352 aa)) the chain is on the cytoplasmic side. Residue Asp329 is the 4-aspartylphosphate intermediate of the active site. Mg(2+) contacts are provided by Asp588 and Asp592. Residues 644 to 665 (NYTIYAVSITIRIVFGFMLIAL) form a helical membrane-spanning segment. Residues 666–670 (IWEFD) lie on the Extracellular side of the membrane. A helical transmembrane segment spans residues 671–693 (FSAFMVLIIAILNDGTIMTISKD). Residues 694 to 709 (RVKPSPTPDSWKLKEI) are Cytoplasmic-facing. A helical membrane pass occupies residues 710 to 730 (FATGIVLGGYQAIMSVIFFWA). The Extracellular portion of the chain corresponds to 731 to 751 (AHKTDFFSDKFGVRSIRDNND). Residues 752–772 (ELMGAVYLQVSIISQALIFVT) traverse the membrane as a helical segment. The Cytoplasmic segment spans residues 773–784 (RSRSWSFVERPG). Residues 785–805 (ALLMIAFVIAQLVATLIAVYA) form a helical membrane-spanning segment. Topologically, residues 806–813 (DWTFAKVK) are extracellular. A helical membrane pass occupies residues 814–834 (GIGWGWAGVIWIYSIVTYFPQ). Over 835–949 (DILKFAIRYI…IDTAGHHYTV (115 aa)) the chain is Cytoplasmic. Thr881 is subject to Phosphothreonine. Ser899 and Ser931 each carry phosphoserine. Residues 947–949 (YTV) are interaction with 14-3-3 proteins. Residue Thr948 is modified to Phosphothreonine.

This sequence belongs to the cation transport ATPase (P-type) (TC 3.A.3) family. Type IIIA subfamily. As to quaternary structure, binds to 14-3-3 proteins. The binding is induced by phosphorylation of Thr-948. Binding to 14-3-3 proteins activates the H(+)-ATPase. Interacts with PPI1; this interaction promotes ATPase activity. Interacts with PSY1R. Part of a functional complex containing PSKR1, BAK1, CNGC17, and AHA. Interacts with CNGC17 and PSKR1. Triggered by SAUR9 via the phosphorylation of the C-terminal autoinhibitory domain. Interacts with AHA2. Binds to CBC1 and CBC2. Post-translationally, phosphorylated, probably by PHOT1 and PHOT2, at C-terminal Thr-948 in guard cells in response to blue light to induce stomatal opening. Expressed in guard cells, mesophyll cells, leaves and roots.

It is found in the cell membrane. The catalysed reaction is ATP + H2O + H(+)(in) = ADP + phosphate + 2 H(+)(out). Its activity is regulated as follows. Phosphorylation on Thr residues is repressed by tyrphostin 9, sphingosine, GW5074 and BML-265. By contrast, the fungal phytotoxin fusicoccin (FC) promotes phosphorylation of Thr-948 independently to BHP, thus leading to large stomatal opening. Functionally, the plasma membrane H(+) ATPase of plants and fungi generates a proton gradient that drives the active transport of nutrients by H(+)-symport. The resulting external acidification and/or internal alkinization may mediate growth responses. Forms a functional cation-translocating unit with CNGC17 that is activated by PSKR1/BAK1 and possibly other BAK1/RLK complexes. Promotes stomatal opening in response to blue light. In Arabidopsis thaliana (Mouse-ear cress), this protein is ATPase 1, plasma membrane-type.